The following is a 203-amino-acid chain: Glycerol-3-phosphate acyltransferase (203 aa).

The next 4 helical transmembrane spans lie at 1 to 21, 84 to 104, 117 to 137, and 157 to 179; these read MIQT…LGAI, WLQV…VWLG, IFLG…MAVI, and LMLL…LMVL.

The protein belongs to the PlsY family. In terms of assembly, probably interacts with PlsX.

It localises to the cell inner membrane. It carries out the reaction an acyl phosphate + sn-glycerol 3-phosphate = a 1-acyl-sn-glycero-3-phosphate + phosphate. Its pathway is lipid metabolism; phospholipid metabolism. Catalyzes the transfer of an acyl group from acyl-phosphate (acyl-PO(4)) to glycerol-3-phosphate (G3P) to form lysophosphatidic acid (LPA). This enzyme utilizes acyl-phosphate as fatty acyl donor, but not acyl-CoA or acyl-ACP. The protein is Glycerol-3-phosphate acyltransferase of Synechococcus sp. (strain CC9605).